The primary structure comprises 407 residues: Flagellar calcium-binding protein TB-44A (407 aa).

The segment at 1–27 is disordered; the sequence is MGCSASKDTTNSKDGAASKGGKDGKTT. Residues 25-399 are 2 X 186 AA almost perfect repeats; sequence KTTADRKVAW…LQVCGDPDGE (375 aa). The EF-hand 1 domain maps to 48–83; sequence ESKSRRIELFKRFDTNGTGKLSFREVLDGCYSILKL. The Ca(2+) site is built by aspartate 61, asparagine 63, threonine 65, lysine 67, and glutamate 72. Residues 110–121 are ancestral calcium site 2; that stretch reads GVGEEDLVEFLE. EF-hand domains lie at 130 to 165, 167 to 202, and 237 to 272; these read YDIF…WKEW, VDIT…KKLQ, and ESKS…ILKL. Ca(2+)-binding residues include aspartate 143, aspartate 145, serine 147, glutamate 154, aspartate 180, asparagine 182, serine 184, glutamate 191, aspartate 250, asparagine 252, threonine 254, lysine 256, and glutamate 261. Residues 299–310 are ancestral calcium site 6; that stretch reads GVGEEDLVEFLE. EF-hand domains lie at 319–354 and 356–391; these read YDIF…WKEW and VDIT…KKLQ. 8 residues coordinate Ca(2+): aspartate 332, aspartate 334, serine 336, glutamate 343, aspartate 369, asparagine 371, serine 373, and glutamate 380.

The protein belongs to the calflagin family.

Its subcellular location is the cell projection. It is found in the cilium. The protein resides in the flagellum. May contribute to the rapid motility of the trypanosomes, playing a role either in flagellar structure or in calcium metabolism. Could alternate between a GDP-bound inactive form to a calcium/GTP-bound active form. The chain is Flagellar calcium-binding protein TB-44A from Trypanosoma brucei brucei.